A 625-amino-acid polypeptide reads, in one-letter code: tRNA uridine 5-carboxymethylaminomethyl modification enzyme MnmG (625 aa).

Residues 10–15, V122, and S177 each bind FAD; that span reads GGGHAG. 271–285 is a binding site for NAD(+); that stretch reads GPRYCPSIEDKVNRF. Q368 is a binding site for FAD.

This sequence belongs to the MnmG family. Homodimer. Heterotetramer of two MnmE and two MnmG subunits. The cofactor is FAD.

The protein resides in the cytoplasm. Functionally, NAD-binding protein involved in the addition of a carboxymethylaminomethyl (cmnm) group at the wobble position (U34) of certain tRNAs, forming tRNA-cmnm(5)s(2)U34. The polypeptide is tRNA uridine 5-carboxymethylaminomethyl modification enzyme MnmG (Wolinella succinogenes (strain ATCC 29543 / DSM 1740 / CCUG 13145 / JCM 31913 / LMG 7466 / NCTC 11488 / FDC 602W) (Vibrio succinogenes)).